The primary structure comprises 442 residues: tRNA-2-methylthio-N(6)-dimethylallyladenosine synthase (442 aa).

An MTTase N-terminal domain is found at 2–120 (KKVFIRTFGC…LPKMIVDKET (119 aa)). C11, C49, C83, C157, C161, and C164 together coordinate [4Fe-4S] cluster. One can recognise a Radical SAM core domain in the interval 143–375 (RVEGGAAFVS…NEVIEAETAR (233 aa)). The 64-residue stretch at 378 to 441 (QTMIGTVQRC…TFSLRGKVVE (64 aa)) folds into the TRAM domain.

Belongs to the methylthiotransferase family. MiaB subfamily. Monomer. The cofactor is [4Fe-4S] cluster.

Its subcellular location is the cytoplasm. It carries out the reaction N(6)-dimethylallyladenosine(37) in tRNA + (sulfur carrier)-SH + AH2 + 2 S-adenosyl-L-methionine = 2-methylsulfanyl-N(6)-dimethylallyladenosine(37) in tRNA + (sulfur carrier)-H + 5'-deoxyadenosine + L-methionine + A + S-adenosyl-L-homocysteine + 2 H(+). Catalyzes the methylthiolation of N6-(dimethylallyl)adenosine (i(6)A), leading to the formation of 2-methylthio-N6-(dimethylallyl)adenosine (ms(2)i(6)A) at position 37 in tRNAs that read codons beginning with uridine. In Neisseria meningitidis serogroup C (strain 053442), this protein is tRNA-2-methylthio-N(6)-dimethylallyladenosine synthase.